The following is a 2199-amino-acid chain: DNA polymerase epsilon catalytic subunit A (2199 aa).

Zn(2+) is bound by residues C2069, C2072, C2104, and C2107. The segment at 2069 to 2107 (CKQCGVHQDFDLCLHEHLWPTRDDMGTLVFSDGWSCSSC) adopts a CysA-type zinc-finger fold. Residues C2138, C2141, C2153, and C2155 each contribute to the [4Fe-4S] cluster site. Positions 2138–2155 (CSKCKTVKQWSLKERCSC) match the CysB motif motif.

This sequence belongs to the DNA polymerase type-B family. As to quaternary structure, heterotetramer. Consists of 4 subunits: pol2, dpb2, dpb3 and dpb4. [4Fe-4S] cluster serves as cofactor.

Its subcellular location is the nucleus. The catalysed reaction is DNA(n) + a 2'-deoxyribonucleoside 5'-triphosphate = DNA(n+1) + diphosphate. Functionally, DNA polymerase II participates in chromosomal DNA replication. The chain is DNA polymerase epsilon catalytic subunit A (pol2) from Schizosaccharomyces pombe (strain 972 / ATCC 24843) (Fission yeast).